The sequence spans 154 residues: Superoxide dismutase [Cu-Zn] (154 aa).

Residues H47, H49, and H64 each contribute to the Cu cation site. C58 and C147 are oxidised to a cystine. Zn(2+)-binding residues include H64, H72, H81, and D84. Residue H121 coordinates Cu cation.

This sequence belongs to the Cu-Zn superoxide dismutase family. Homodimer. Requires Cu cation as cofactor. It depends on Zn(2+) as a cofactor.

It localises to the cytoplasm. It carries out the reaction 2 superoxide + 2 H(+) = H2O2 + O2. Its function is as follows. Destroys radicals which are normally produced within the cells and which are toxic to biological systems. This Pinus sylvestris (Scotch pine) protein is Superoxide dismutase [Cu-Zn] (SODCC).